The primary structure comprises 149 residues: MHCPFCSENDTKVIDSRLVADGHQVRRRRQCLACNERFTTFETAELLMPKVIKSNGNREPFNEDKMVGGIQRALEKRPVSADAIELAISMIKSKLRATGEREVPSKMIGNLVMEQLKHLDKVAYIRFASVYRSFEDIREFGEEIARLED.

The segment at 3-34 (CPFCSENDTKVIDSRLVADGHQVRRRRQCLAC) is a zinc-finger region. The ATP-cone domain occupies 49–139 (PKVIKSNGNR…VYRSFEDIRE (91 aa)).

This sequence belongs to the NrdR family. Zn(2+) is required as a cofactor.

Its function is as follows. Negatively regulates transcription of bacterial ribonucleotide reductase nrd genes and operons by binding to NrdR-boxes. This Vibrio vulnificus (strain YJ016) protein is Transcriptional repressor NrdR.